Here is a 196-residue protein sequence, read N- to C-terminus: Probable malonic semialdehyde reductase RutE (196 aa).

The protein belongs to the nitroreductase family. HadB/RutE subfamily. It depends on FMN as a cofactor.

The enzyme catalyses 3-hydroxypropanoate + NADP(+) = 3-oxopropanoate + NADPH + H(+). May reduce toxic product malonic semialdehyde to 3-hydroxypropionic acid, which is excreted. This is Probable malonic semialdehyde reductase RutE from Yersinia enterocolitica serotype O:8 / biotype 1B (strain NCTC 13174 / 8081).